A 787-amino-acid polypeptide reads, in one-letter code: DNA ligase (787 aa).

NAD(+) contacts are provided by residues 32–36 (DVEYD), 81–82 (SL), and Glu121. Residue Lys123 is the N6-AMP-lysine intermediate of the active site. NAD(+)-binding residues include Arg144, Glu181, Lys297, and Lys321. Residues Cys415, Cys418, Cys445, and Cys451 each contribute to the Zn(2+) site. Residues 703–787 (VEGLPLAGQT…RLIELGVAVD (85 aa)) form the BRCT domain.

The protein belongs to the NAD-dependent DNA ligase family. LigA subfamily. Mg(2+) serves as cofactor. Requires Mn(2+) as cofactor.

It carries out the reaction NAD(+) + (deoxyribonucleotide)n-3'-hydroxyl + 5'-phospho-(deoxyribonucleotide)m = (deoxyribonucleotide)n+m + AMP + beta-nicotinamide D-nucleotide.. Functionally, DNA ligase that catalyzes the formation of phosphodiester linkages between 5'-phosphoryl and 3'-hydroxyl groups in double-stranded DNA using NAD as a coenzyme and as the energy source for the reaction. It is essential for DNA replication and repair of damaged DNA. The polypeptide is DNA ligase (Pseudomonas syringae pv. syringae (strain B728a)).